The sequence spans 73 residues: uncharacterized protein (73 aa).

This is an uncharacterized protein from Treponema pallidum (strain Nichols).